A 226-amino-acid chain; its full sequence is MGRLFVKICGITRQDQAEAIAALGVSALGFIAVPNTPRYLPLSQARWLASLPRHVEKVGVFVDPDPRTIATWVEVGGLTAVQLHGRESPEECRQLGEWLPGIRRIKALRIRHLADLEAAHLYGDCVEALLLDAYHPQRAGGTGQTLNWPELAHRSLPLPWLLAGGLTPDNVLQALSHLQPSGIDLSSGVERQPGDKDLHKVWRLLQQLESQGWQIASALPQPNQGL.

The protein belongs to the TrpF family.

The catalysed reaction is N-(5-phospho-beta-D-ribosyl)anthranilate = 1-(2-carboxyphenylamino)-1-deoxy-D-ribulose 5-phosphate. The protein operates within amino-acid biosynthesis; L-tryptophan biosynthesis; L-tryptophan from chorismate: step 3/5. This chain is N-(5'-phosphoribosyl)anthranilate isomerase, found in Synechococcus sp. (strain JA-3-3Ab) (Cyanobacteria bacterium Yellowstone A-Prime).